The chain runs to 423 residues: Histidine--tRNA ligase 2 (423 aa).

This sequence belongs to the class-II aminoacyl-tRNA synthetase family. In terms of assembly, homodimer.

The protein localises to the cytoplasm. It catalyses the reaction tRNA(His) + L-histidine + ATP = L-histidyl-tRNA(His) + AMP + diphosphate + H(+). The sequence is that of Histidine--tRNA ligase 2 from Bacillus cereus (strain ATCC 10987 / NRS 248).